Consider the following 324-residue polypeptide: Chlorophyllase-1 (324 aa).

The short motif at 136–140 is the GXSXG element; sequence GHSRG. The active-site Nucleophile is the serine 138. Active-site charge relay system residues include aspartate 168 and histidine 243.

It belongs to the AB hydrolase superfamily. Lipase family. As to expression, expressed in seedlings, leaves, flowers and siliques, but not in roots.

The protein resides in the cytoplasm. The protein localises to the cytosol. The enzyme catalyses a chlorophyll + H2O = a chlorophyllide + phytol + H(+). It catalyses the reaction chlorophyll a + H2O = phytol + chlorophyllide a + H(+). It functions in the pathway porphyrin-containing compound metabolism; chlorophyll degradation. Its function is as follows. Catalyzes the hydrolysis of ester bond in chlorophyll to yield chlorophyllide and phytol. Shows a preferential activity toward chlorophyll a. Does not seem to be required for chlorophyll degradation during senescence. May modulate the balance between different plant defense pathways. The protein is Chlorophyllase-1 of Arabidopsis thaliana (Mouse-ear cress).